We begin with the raw amino-acid sequence, 121 residues long: DNA-directed RNA polymerase subunit omega (121 aa).

The tract at residues 95-121 (DGDAANDLQGEEDDLGLGLDEAEDLGF) is disordered. The segment covering 103 to 121 (QGEEDDLGLGLDEAEDLGF) has biased composition (acidic residues).

Belongs to the RNA polymerase subunit omega family. In terms of assembly, the RNAP catalytic core consists of 2 alpha, 1 beta, 1 beta' and 1 omega subunit. When a sigma factor is associated with the core the holoenzyme is formed, which can initiate transcription.

The enzyme catalyses RNA(n) + a ribonucleoside 5'-triphosphate = RNA(n+1) + diphosphate. Functionally, promotes RNA polymerase assembly. Latches the N- and C-terminal regions of the beta' subunit thereby facilitating its interaction with the beta and alpha subunits. The protein is DNA-directed RNA polymerase subunit omega of Magnetococcus marinus (strain ATCC BAA-1437 / JCM 17883 / MC-1).